An 869-amino-acid polypeptide reads, in one-letter code: Ribonucleoside-diphosphate reductase large chain 2 (869 aa).

The region spanning 1–92 is the ATP-cone domain; the sequence is MYVIKRDGRK…ISNLHKQTTK (92 aa). ATP is bound by residues 5-6, 11-17, Thr53, and Asp57; these read KR and EPVQFDK. Residues Ser202 and Ser217 each contribute to the GDP site. The cysteines at positions 218 and 443 are disulfide-linked. DTTP-binding positions include 226-228, Lys243, Arg256, and 263-264; these read DSI and AG. Position 227 is a phosphoserine (Ser227). Lys387 participates in a covalent cross-link: Glycyl lysine isopeptide (Lys-Gly) (interchain with G-Cter in ubiquitin). A GDP-binding site is contributed by Asn426. Asn426 serves as the catalytic Proton acceptor. Catalysis depends on Cys428, which acts as the Cysteine radical intermediate. Residues Glu430 and 608–611 each bind GDP; that span reads TAST. The Proton acceptor role is filled by Glu430. The segment at 793-843 is disordered; it reads SALTESSDNEKDASPVPSEQSSVSSAMSNVKLEDSVAPAVPTETIKEDSDE. Phosphoserine occurs at positions 806, 827, and 868. A compositionally biased stretch (low complexity) spans 806-820; that stretch reads SPVPSEQSSVSSAMS.

This sequence belongs to the ribonucleoside diphosphate reductase large chain family. Heterotetramer of two large (R1) and two small (R2) subunits. S.cerevisiae has two different R1 subunits (RNR1 and RNR3) and two different R2 subunits (RNR2 and RNR4). The functional form of the small subunits is a RNR2-RNR4 heterodimer, where RNR2 provides the iron-radical center and RNR4 is required for proper folding of RNR2 and assembly with the large subunits. Under normal growth conditions, the active form of the large subunits is a homodimer of the constitutively expressed RNR1. In damaged cells or cells arrested for DNA synthesis, the reductase consists of multiple species because of the association of the small subunits (RNR2-RNR4) with either the RNR1 homodimer or a heterodimer of RNR1 and the damage-inducible RNR3.

The protein resides in the cytoplasm. The catalysed reaction is a 2'-deoxyribonucleoside 5'-diphosphate + [thioredoxin]-disulfide + H2O = a ribonucleoside 5'-diphosphate + [thioredoxin]-dithiol. Its activity is regulated as follows. Under complex allosteric control mediated by deoxynucleoside triphosphates and ATP binding to separate specificity and activation sites on the large subunit. The type of nucleotide bound at the specificity site determines substrate preference. It seems probable that ATP makes the enzyme reduce CDP and UDP, dGTP favors ADP reduction and dTTP favors GDP reduction. Stimulated by ATP and inhibited by dATP binding to the activity site. In terms of biological role, provides the precursors necessary for DNA synthesis. Catalyzes the biosynthesis of deoxyribonucleotides from the corresponding ribonucleotides. The sequence is that of Ribonucleoside-diphosphate reductase large chain 2 (RNR3) from Saccharomyces cerevisiae (strain ATCC 204508 / S288c) (Baker's yeast).